Consider the following 365-residue polypeptide: Spermidine-binding periplasmic protein SpuE (365 aa).

An N-terminal signal peptide occupies residues 1–24 (MQHSIGKTLLVAALATAIAGPVQA). T35, E181, D242, and N269 together coordinate spermidine.

This sequence belongs to the bacterial solute-binding protein PotD/PotF family.

The protein resides in the periplasm. Spermidine-binding protein probably required for its uptake into cells. Binds spermidine with high affinity (KD=14.3 nM). Does not bind putrescine, cadaverine or spermine. Spermidine binding induces large inter-domain conformational changes. Implicated in induction of type 3 secretion systems (T3SS), which play a role in virulence. This is Spermidine-binding periplasmic protein SpuE (spuE) from Pseudomonas aeruginosa (strain ATCC 15692 / DSM 22644 / CIP 104116 / JCM 14847 / LMG 12228 / 1C / PRS 101 / PAO1).